We begin with the raw amino-acid sequence, 306 residues long: Pyridoxal 5'-phosphate synthase subunit PdxS (306 aa).

Aspartate 36 lines the D-ribose 5-phosphate pocket. Lysine 93 acts as the Schiff-base intermediate with D-ribose 5-phosphate in catalysis. Residue glycine 165 coordinates D-ribose 5-phosphate. Position 177 (arginine 177) interacts with D-glyceraldehyde 3-phosphate. Residues glycine 226 and 247–248 (GS) contribute to the D-ribose 5-phosphate site.

This sequence belongs to the PdxS/SNZ family. As to quaternary structure, in the presence of PdxT, forms a dodecamer of heterodimers.

The enzyme catalyses aldehydo-D-ribose 5-phosphate + D-glyceraldehyde 3-phosphate + L-glutamine = pyridoxal 5'-phosphate + L-glutamate + phosphate + 3 H2O + H(+). It participates in cofactor biosynthesis; pyridoxal 5'-phosphate biosynthesis. Catalyzes the formation of pyridoxal 5'-phosphate from ribose 5-phosphate (RBP), glyceraldehyde 3-phosphate (G3P) and ammonia. The ammonia is provided by the PdxT subunit. Can also use ribulose 5-phosphate and dihydroxyacetone phosphate as substrates, resulting from enzyme-catalyzed isomerization of RBP and G3P, respectively. This chain is Pyridoxal 5'-phosphate synthase subunit PdxS, found in Nocardia farcinica (strain IFM 10152).